A 59-amino-acid polypeptide reads, in one-letter code: U-actitoxin-Aer2b (59 aa).

In terms of processing, contains 5 disulfide bonds.

The protein resides in the secreted. It localises to the nematocyst. In Anemonia erythraea (Sea anemone), this protein is U-actitoxin-Aer2b.